A 239-amino-acid chain; its full sequence is MARLGVNIDHVATIRQARGGAEPDPVAAAAIAELAGADGITIHLREDRRHIQDRDLRLLRQTIKTRLNLEMAATDEMVSIALSVKPDMCTLVPEKRQELTTEGGLDVRLHLDAIRGAVQKLQDGGLIVSLFIDPDTDQIKAADKSGADYIEIHTGAFAEASDWKAEQEELKKIENAIKLAGKLGLGVNAGHGLNYSNIRKVAALGGIEEYNIGHSIISKAVLVGLDRAVRDMVDLVKYS.

Asparagine 7 serves as a coordination point for 3-amino-2-oxopropyl phosphate. 9–10 lines the 1-deoxy-D-xylulose 5-phosphate pocket; it reads DH. Arginine 18 lines the 3-amino-2-oxopropyl phosphate pocket. The Proton acceptor role is filled by histidine 43. Residues arginine 45 and histidine 50 each coordinate 1-deoxy-D-xylulose 5-phosphate. Glutamate 70 acts as the Proton acceptor in catalysis. 1-deoxy-D-xylulose 5-phosphate is bound at residue threonine 100. The Proton donor role is filled by histidine 191. Residues glycine 192 and 213-214 contribute to the 3-amino-2-oxopropyl phosphate site; that span reads GH.

The protein belongs to the PNP synthase family. Homooctamer; tetramer of dimers.

Its subcellular location is the cytoplasm. The enzyme catalyses 3-amino-2-oxopropyl phosphate + 1-deoxy-D-xylulose 5-phosphate = pyridoxine 5'-phosphate + phosphate + 2 H2O + H(+). The protein operates within cofactor biosynthesis; pyridoxine 5'-phosphate biosynthesis; pyridoxine 5'-phosphate from D-erythrose 4-phosphate: step 5/5. In terms of biological role, catalyzes the complicated ring closure reaction between the two acyclic compounds 1-deoxy-D-xylulose-5-phosphate (DXP) and 3-amino-2-oxopropyl phosphate (1-amino-acetone-3-phosphate or AAP) to form pyridoxine 5'-phosphate (PNP) and inorganic phosphate. The polypeptide is Pyridoxine 5'-phosphate synthase (Geotalea daltonii (strain DSM 22248 / JCM 15807 / FRC-32) (Geobacter daltonii)).